Consider the following 430-residue polypeptide: MAVSARAGIVITGTEVLTGRVQDRNGPWIADRLLELGVELAHITICGDRPADIEAQLRFMAEQGVDLIVTSGGLGPTADDMTVEVVARYCGRELVLDDELENRIANILKKLMGRNPAIEPANFDSIRAANRKQAMIPAGSQVIDPVGTAPGLVVPGRPAVMVLPGPPRELQPIWSKAIQTAPVQDAIAGRTTYRQETIRIFGLPESSLADTLRDAEAAIPGFDLVEITTCLRRGEIEMVTRFEPNAAQVYTQLARLLRDRHGHQVYSEDGASVDELVAKLLTGRRIATAESCTAGLLAARLTDRPGSSKYVAGAVVAYSNEAKAQLLGVDPALIEAHGAVSEPVAQAMAAGALQGFGADTATAITGIAGPSGGTPEKPVGTVCFTVLLDDGRTTTRTVRLPGNRSDIRERSTTVAMHLLRRTLSGIPGSP.

This sequence belongs to the CinA family.

This is CinA-like protein from Mycobacterium tuberculosis (strain ATCC 25177 / H37Ra).